A 207-amino-acid polypeptide reads, in one-letter code: Protein DMP1 (207 aa).

Residues 1–20 form a disordered region; sequence MSETSLLIPKTNSPASSENM. 4 helical membrane passes run 33–53, 64–84, 121–141, and 159–179; these read LIKL…PVLT, VMSS…CFTD, IADF…VLLD, and LVMA…ALFP.

Belongs to the plant DMP1 protein family. In terms of tissue distribution, expressed in leaves, siliques and roots.

The protein localises to the endoplasmic reticulum membrane. It is found in the vacuole membrane. In terms of biological role, involved in membrane remodeling including fission during breakdown of the endoplasmic reticulum (ER) and the tonoplast during leaf senescence and in membrane fusion during vacuole biogenesis in roots. In Arabidopsis thaliana (Mouse-ear cress), this protein is Protein DMP1.